The chain runs to 629 residues: DNA mismatch repair protein MutL (629 aa).

The protein belongs to the DNA mismatch repair MutL/HexB family.

This protein is involved in the repair of mismatches in DNA. It is required for dam-dependent methyl-directed DNA mismatch repair. May act as a 'molecular matchmaker', a protein that promotes the formation of a stable complex between two or more DNA-binding proteins in an ATP-dependent manner without itself being part of a final effector complex. In Haemophilus influenzae (strain 86-028NP), this protein is DNA mismatch repair protein MutL.